A 37-amino-acid chain; its full sequence is Cytochrome b6-f complex subunit 5 (37 aa).

Residues 5–25 (LLSGIVLGMIPVTLAGLFVTA) form a helical membrane-spanning segment.

Belongs to the PetG family. As to quaternary structure, the 4 large subunits of the cytochrome b6-f complex are cytochrome b6, subunit IV (17 kDa polypeptide, PetD), cytochrome f and the Rieske protein, while the 4 small subunits are PetG, PetL, PetM and PetN. The complex functions as a dimer.

It localises to the plastid. The protein localises to the chloroplast thylakoid membrane. Component of the cytochrome b6-f complex, which mediates electron transfer between photosystem II (PSII) and photosystem I (PSI), cyclic electron flow around PSI, and state transitions. PetG is required for either the stability or assembly of the cytochrome b6-f complex. In Staurastrum punctulatum (Green alga), this protein is Cytochrome b6-f complex subunit 5.